The chain runs to 656 residues: Phosphoprotein 85 (656 aa).

2 disordered regions span residues M1 to E174 and N615 to C656. The segment covering S46–E55 has biased composition (basic and acidic residues). Composition is skewed to low complexity over residues S59 to S70 and D140 to S160. Residues S625–D634 are compositionally biased toward pro residues. A compositionally biased stretch (basic and acidic residues) spans Y635–C656.

It belongs to the herpesviridae pp85 family. Post-translationally, phosphorylated.

It is found in the virion tegument. It localises to the host cytoplasm. The sequence is that of Phosphoprotein 85 (UL25) from Homo sapiens (Human).